A 261-amino-acid chain; its full sequence is 1-(5-phosphoribosyl)-5-[(5-phosphoribosylamino)methylideneamino] imidazole-4-carboxamide isomerase (261 aa).

D7 acts as the Proton acceptor in catalysis. D129 functions as the Proton donor in the catalytic mechanism.

It belongs to the HisA/HisF family.

It localises to the cytoplasm. It catalyses the reaction 1-(5-phospho-beta-D-ribosyl)-5-[(5-phospho-beta-D-ribosylamino)methylideneamino]imidazole-4-carboxamide = 5-[(5-phospho-1-deoxy-D-ribulos-1-ylimino)methylamino]-1-(5-phospho-beta-D-ribosyl)imidazole-4-carboxamide. Its pathway is amino-acid biosynthesis; L-histidine biosynthesis; L-histidine from 5-phospho-alpha-D-ribose 1-diphosphate: step 4/9. The chain is 1-(5-phosphoribosyl)-5-[(5-phosphoribosylamino)methylideneamino] imidazole-4-carboxamide isomerase from Colwellia psychrerythraea (strain 34H / ATCC BAA-681) (Vibrio psychroerythus).